We begin with the raw amino-acid sequence, 219 residues long: MEILLNDVEVRVLGCLIEKELATPEYYPLTLNSLTTACNQKSNRDPVMALEESEVVRALDGLKMKHVAIQAADSGRVPRYRHILSERLRFSPAELAILAELLLRGPQTLGELRTRAERMHPFADLAAVEQVLGELAERTPPLVMRLPRQPGRKESRFAHLLAGEPDLSAEERTAPPEGARLQVMAENERIAALELEVATLRAEVGELRQVMEEFRSQFE.

This sequence belongs to the UPF0502 family.

In Geobacter sulfurreducens (strain ATCC 51573 / DSM 12127 / PCA), this protein is UPF0502 protein GSU0233.